The primary structure comprises 101 residues: MDPVDPNIEPWNQPGSQPKTACNQCYCKRCCYHCQICFLKKGLGISNGRKKRRPRRTTPYNSENHQDPLRKQPLSQPRGEQTDPKESKKKVESKTKTDQFD.

The segment at Met-1 to Thr-20 is disordered. The interaction with human CREBBP stretch occupies residues Met-1–Gln-24. The segment at Met-1–Gly-48 is transactivation. Zn(2+)-binding residues include Cys-22, Cys-25, and Cys-27. A cysteine-rich region spans residues Cys-22–Cys-37. Lys-28 is subject to N6-acetyllysine; by host PCAF. Cys-30, His-33, Cys-34, and Cys-37 together coordinate Zn(2+). The core stretch occupies residues Phe-38 to Gly-48. Residues Ile-45–Asp-101 are disordered. Positions Arg-49–Thr-57 match the Nuclear localization signal, RNA-binding (TAR), and protein transduction motif. Residues Arg-49 to Glu-86 form an interaction with the host capping enzyme RNGTT region. Lys-50 and Lys-51 each carry N6-acetyllysine; by host EP300 and GCN5L2. Residues Arg-52 and Arg-53 each carry the asymmetric dimethylarginine; by host PRMT6 modification. A Glycyl lysine isopeptide (Lys-Gly) (interchain with G-Cter in ubiquitin) cross-link involves residue Lys-71. The segment covering Glu-80–Asp-101 has biased composition (basic and acidic residues).

The protein belongs to the lentiviruses Tat family. In terms of assembly, interacts with host CCNT1. Associates with the P-TEFb complex composed at least of Tat, P-TEFb (CDK9 and CCNT1), TAR RNA, RNA Pol II. Recruits the HATs CREBBP, TAF1/TFIID, EP300, PCAF and GCN5L2. Interacts with host KAT5/Tip60; this interaction targets the latter to degradation. Interacts with the host deacetylase SIRT1. Interacts with host capping enzyme RNGTT; this interaction stimulates RNGTT. Binds to host KDR, and to the host integrins ITGAV/ITGB3 and ITGA5/ITGB1. Interacts with host KPNB1/importin beta-1 without previous binding to KPNA1/importin alpha-1. Interacts with EIF2AK2. Interacts with host nucleosome assembly protein NAP1L1; this interaction may be required for the transport of Tat within the nucleus, since the two proteins interact at the nuclear rim. Interacts with host C1QBP/SF2P32; this interaction involves lysine-acetylated Tat. Interacts with the host chemokine receptors CCR2, CCR3 and CXCR4. Interacts with host DPP4/CD26; this interaction may trigger an anti-proliferative effect. Interacts with host LDLR. Interacts with the host extracellular matrix metalloproteinase MMP1. Interacts with host PRMT6; this interaction mediates Tat's methylation. Interacts with, and is ubiquitinated by MDM2/Hdm2. Interacts with host PSMC3 and HTATIP2. Interacts with STAB1; this interaction may overcome SATB1-mediated repression of IL2 and IL2RA (interleukin) in T cells by binding to the same domain than HDAC1. Interacts (when acetylated) with human CDK13, thereby increasing HIV-1 mRNA splicing and promoting the production of the doubly spliced HIV-1 protein Nef. Interacts with host TBP; this interaction modulates the activity of transcriptional pre-initiation complex. Interacts with host RELA. Interacts with host PLSCR1; this interaction negatively regulates Tat transactivation activity by altering its subcellular distribution. In terms of processing, asymmetrical arginine methylation by host PRMT6 seems to diminish the transactivation capacity of Tat and affects the interaction with host CCNT1. Post-translationally, acetylation by EP300, CREBBP, GCN5L2/GCN5 and PCAF regulates the transactivation activity of Tat. EP300-mediated acetylation of Lys-50 promotes dissociation of Tat from the TAR RNA through the competitive binding to PCAF's bromodomain. In addition, the non-acetylated Tat's N-terminus can also interact with PCAF. PCAF-mediated acetylation of Lys-28 enhances Tat's binding to CCNT1. Lys-50 is deacetylated by SIRT1. Polyubiquitination by host MDM2 does not target Tat to degradation, but activates its transactivation function and fosters interaction with CCNT1 and TAR RNA. In terms of processing, phosphorylated by EIF2AK2 on serine and threonine residues adjacent to the basic region important for TAR RNA binding and function. Phosphorylation of Tat by EIF2AK2 is dependent on the prior activation of EIF2AK2 by dsRNA.

The protein resides in the host nucleus. It localises to the host nucleolus. The protein localises to the host cytoplasm. It is found in the secreted. In terms of biological role, transcriptional activator that increases RNA Pol II processivity, thereby increasing the level of full-length viral transcripts. Recognizes a hairpin structure at the 5'-LTR of the nascent viral mRNAs referred to as the transactivation responsive RNA element (TAR) and recruits the cyclin T1-CDK9 complex (P-TEFb complex) that will in turn hyperphosphorylate the RNA polymerase II to allow efficient elongation. The CDK9 component of P-TEFb and other Tat-activated kinases hyperphosphorylate the C-terminus of RNA Pol II that becomes stabilized and much more processive. Other factors such as HTATSF1/Tat-SF1, SUPT5H/SPT5, and HTATIP2 are also important for Tat's function. Besides its effect on RNA Pol II processivity, Tat induces chromatin remodeling of proviral genes by recruiting the histone acetyltransferases (HATs) CREBBP, EP300 and PCAF to the chromatin. This also contributes to the increase in proviral transcription rate, especially when the provirus integrates in transcriptionally silent region of the host genome. To ensure maximal activation of the LTR, Tat mediates nuclear translocation of NF-kappa-B by interacting with host RELA. Through its interaction with host TBP, Tat may also modulate transcription initiation. Tat can reactivate a latently infected cell by penetrating in it and transactivating its LTR promoter. In the cytoplasm, Tat is thought to act as a translational activator of HIV-1 mRNAs. Functionally, extracellular circulating Tat can be endocytosed by surrounding uninfected cells via the binding to several surface receptors such as CD26, CXCR4, heparan sulfate proteoglycans (HSPG) or LDLR. Neurons are rarely infected, but they internalize Tat via their LDLR. Through its interaction with nuclear HATs, Tat is potentially able to control the acetylation-dependent cellular gene expression. Modulates the expression of many cellular genes involved in cell survival, proliferation or in coding for cytokines or cytokine receptors. Tat plays a role in T-cell and neurons apoptosis. Tat induced neurotoxicity and apoptosis probably contribute to neuroAIDS. Circulating Tat also acts as a chemokine-like and/or growth factor-like molecule that binds to specific receptors on the surface of the cells, affecting many cellular pathways. In the vascular system, Tat binds to ITGAV/ITGB3 and ITGA5/ITGB1 integrins dimers at the surface of endothelial cells and competes with bFGF for heparin-binding sites, leading to an excess of soluble bFGF. This Homo sapiens (Human) protein is Protein Tat.